The sequence spans 254 residues: Transmembrane protein 70, mitochondrial (254 aa).

The transit peptide at 1 to 78 directs the protein to the mitochondrion; the sequence is MLFLALGGPW…PVCWERGVRC (78 aa). Residues 79–112 are Mitochondrial matrix-facing; that stretch reads SHTQLDKSEDGRLIYTGNLARTVFGVKCFSYSTS. The chain crosses the membrane as a helical span at residues 113–133; it reads LISLAFLPYIFAQNNVIFGSL. Residues 134–136 lie on the Mitochondrial intermembrane side of the membrane; it reads PLQ. The helical transmembrane segment at 137–157 threads the bilayer; that stretch reads ILFYGTIGSFTVITPALLHFL. The Mitochondrial matrix segment spans residues 158 to 254; that stretch reads TKGYVIRLYH…SEKKQLKEEK (97 aa).

This sequence belongs to the TMEM70 family. Homooligomer. Interacts (homooligomer form) with ATP5MC1; this interaction facilitates the oligomer formation of subunit c/ATP5MC1 (c-ring) and the c-ring membrane insertion and also protects ATP5MC1 against intramitochondrial proteolysis. Interacts with the core subunits TMEM126B, NDUFAF1, ECSIT and ACAD9 of the MCIA complex. Interacts with ATP5MC3, TMEM242 and TIMMDC1.

The protein resides in the mitochondrion inner membrane. Scaffold protein that participates in the c-ring assembly of mitochondrial ATP synthase (F(1)F(0) ATP synthase or complex V) by facilitating the membrane insertion and oligomer formation of the subunit c/ATP5MC1 through its interaction. Therefore, participates in the early stage of mitochondrial ATP synthase biogenesis and also protects subunit c/ATP5MC1 against intramitochondrial proteolysis. In addition, binds the mitochondrial proton-transporting ATP synthase complexes I and may play a role in the stability of its membrane-bound subassemblies. The chain is Transmembrane protein 70, mitochondrial from Bos taurus (Bovine).